The sequence spans 36 residues: Photosystem I reaction center subunit VIII (36 aa).

A helical transmembrane segment spans residues 9–29 (ILVPLVGLVFPAIAMASLFLY).

The protein belongs to the PsaI family.

It localises to the plastid. The protein resides in the chloroplast thylakoid membrane. In terms of biological role, may help in the organization of the PsaL subunit. The protein is Photosystem I reaction center subunit VIII of Oltmannsiellopsis viridis (Marine flagellate).